The chain runs to 340 residues: Glyceraldehyde-3-phosphate dehydrogenase (340 aa).

NAD(+) contacts are provided by residues 11–12 (SI) and Gly111. 140–142 (SCN) provides a ligand contact to D-glyceraldehyde 3-phosphate. The active-site Nucleophile is Cys141. Arg169 is an NAD(+) binding site. 195-196 (HG) contacts D-glyceraldehyde 3-phosphate. Gln303 contributes to the NAD(+) binding site.

This sequence belongs to the glyceraldehyde-3-phosphate dehydrogenase family. Homotetramer.

It is found in the cytoplasm. It catalyses the reaction D-glyceraldehyde 3-phosphate + phosphate + NADP(+) = (2R)-3-phospho-glyceroyl phosphate + NADPH + H(+). It carries out the reaction D-glyceraldehyde 3-phosphate + phosphate + NAD(+) = (2R)-3-phospho-glyceroyl phosphate + NADH + H(+). It functions in the pathway carbohydrate degradation; glycolysis; pyruvate from D-glyceraldehyde 3-phosphate: step 1/5. This is Glyceraldehyde-3-phosphate dehydrogenase from Methanococcus vannielii (strain ATCC 35089 / DSM 1224 / JCM 13029 / OCM 148 / SB).